We begin with the raw amino-acid sequence, 213 residues long: MKAFQRDFIEFAIERGVLKFGEFTLKSGRVSPYFFNAGLFNRGGDLAKLGRFYANALMDAGVEFNVLFGPAYKGIPIATTTAVALADNHNLDVPYCFNRKEAKTHGEGGNLVGSPLEGKVMLVDDVITAGTAIRESMTLIEQQQASLSGVLIALDRQERGKGELSAIQEVERDFNTQVISIVSLADVVSYLGEKGGFDNEIAAINTYRENYGI.

Position 26 (Lys26) interacts with 5-phospho-alpha-D-ribose 1-diphosphate. An orotate-binding site is contributed by 34 to 35 (FF). 5-phospho-alpha-D-ribose 1-diphosphate is bound by residues 72–73 (YK), Arg99, Lys100, Lys103, His105, and 124–132 (DDVITAGTA). Orotate is bound by residues Thr128 and Arg156.

It belongs to the purine/pyrimidine phosphoribosyltransferase family. PyrE subfamily. In terms of assembly, homodimer. The cofactor is Mg(2+).

It catalyses the reaction orotidine 5'-phosphate + diphosphate = orotate + 5-phospho-alpha-D-ribose 1-diphosphate. It functions in the pathway pyrimidine metabolism; UMP biosynthesis via de novo pathway; UMP from orotate: step 1/2. Its function is as follows. Catalyzes the transfer of a ribosyl phosphate group from 5-phosphoribose 1-diphosphate to orotate, leading to the formation of orotidine monophosphate (OMP). This chain is Orotate phosphoribosyltransferase, found in Alteromonas mediterranea (strain DSM 17117 / CIP 110805 / LMG 28347 / Deep ecotype).